Reading from the N-terminus, the 90-residue chain is MKTAIFTVVLALAVFAVLSFGWEANEKALSEEFTELIHEKEAASETEARECRYFWGECHDHMPCCDWLVCGYKWPITYNICVWNRTFPEK.

Residues Met-1–Ser-19 form the signal peptide. Residues Phe-20–Glu-50 constitute a propeptide that is removed on maturation. 3 disulfide bridges follow: Cys-51-Cys-65, Cys-58-Cys-70, and Cys-64-Cys-81.

This sequence belongs to the neurotoxin 10 (Hwtx-1) family. 13 (Hntx-13) subfamily. Expressed by the venom gland.

The protein localises to the secreted. Its function is as follows. Ion channel inhibitor. This Cyriopagopus hainanus (Chinese bird spider) protein is U7-theraphotoxin-Hhn1i.